The following is a 262-amino-acid chain: Thioredoxin-like protein HCF164, chloroplastic (262 aa).

Residues 1–54 (MAVVASRCTGLLLPDLGASLAGFRRRRSTPASSLSFRPRRARRRLGSLSCIAPP) constitute a chloroplast transit peptide. The tract at residues 47 to 90 (SLSCIAPPDSAEPQTDEPAAKDDSTEDKAEASSASQDAGNPTFP) is disordered. Residues 64–76 (PAAKDDSTEDKAE) show a composition bias toward basic and acidic residues. Polar residues predominate over residues 78–89 (SSASQDAGNPTF). Positions 78 to 230 (SSASQDAGNP…FLDNVVALAS (153 aa)) constitute a Thioredoxin domain. Active-site nucleophile residues include Cys-151 and Cys-154. Cys-151 and Cys-154 are oxidised to a cystine.

The protein belongs to the thioredoxin family.

Its subcellular location is the plastid. It is found in the chloroplast. Probable thiol-disulfide oxidoreductase that may participate in various redox reactions in the chloroplast. This chain is Thioredoxin-like protein HCF164, chloroplastic, found in Oryza sativa subsp. japonica (Rice).